The primary structure comprises 503 residues: Glutamate--tRNA ligase (503 aa).

Residues 12-22 carry the 'HIGH' region motif; sequence PSPTGYLHVGG. The short motif at 259–263 is the 'KMSKS' region element; it reads KLSKR. Lysine 262 contributes to the ATP binding site.

It belongs to the class-I aminoacyl-tRNA synthetase family. Glutamate--tRNA ligase type 1 subfamily. As to quaternary structure, monomer.

It is found in the cytoplasm. It carries out the reaction tRNA(Glu) + L-glutamate + ATP = L-glutamyl-tRNA(Glu) + AMP + diphosphate. In terms of biological role, catalyzes the attachment of glutamate to tRNA(Glu) in a two-step reaction: glutamate is first activated by ATP to form Glu-AMP and then transferred to the acceptor end of tRNA(Glu). The sequence is that of Glutamate--tRNA ligase from Chloroherpeton thalassium (strain ATCC 35110 / GB-78).